We begin with the raw amino-acid sequence, 108 residues long: uncharacterized protein (108 aa).

To H.influenzae HI_0341.

This is an uncharacterized protein from Escherichia coli (strain K12).